We begin with the raw amino-acid sequence, 104 residues long: MAAKIRRNDEVIVLTGKDKGKKGKITKVLATGKVIVEGINLVKKHQKPVPAMGVQGGIVEQEAAIDVSNVAIFNAETGKADRVGFRFEDDKKVRFFKSNSVTIK.

Belongs to the universal ribosomal protein uL24 family. In terms of assembly, part of the 50S ribosomal subunit.

Functionally, one of two assembly initiator proteins, it binds directly to the 5'-end of the 23S rRNA, where it nucleates assembly of the 50S subunit. In terms of biological role, one of the proteins that surrounds the polypeptide exit tunnel on the outside of the subunit. This Photobacterium profundum (strain SS9) protein is Large ribosomal subunit protein uL24.